The sequence spans 37 residues: Large ribosomal subunit protein bL36c (37 aa).

It belongs to the bacterial ribosomal protein bL36 family.

It localises to the plastid. Its subcellular location is the chloroplast. The protein is Large ribosomal subunit protein bL36c (rpl36) of Marchantia polymorpha (Common liverwort).